The chain runs to 616 residues: Zinc metalloproteinase-disintegrin-like protein H3 (616 aa).

The signal sequence occupies residues 1–20; it reads MIQVLLVIICLAVFPYQGSS. Positions 21–193 are excised as a propeptide; it reads IILESGNVND…KKASQLNLTP (173 aa). Glu-194 bears the Pyrrolidone carboxylic acid (Glu) mark. The Peptidase M12B domain occupies 203–399; it reads KYIKLVIVAD…KMPQCILNKP (197 aa). 3 cysteine pairs are disulfide-bonded: Cys-314-Cys-394, Cys-354-Cys-378, and Cys-356-Cys-361. Residue His-339 participates in Zn(2+) binding. The Metal-binding signature appears at 339–350; the sequence is HEMGHNLGMDHD. The active-site Proton acceptor is Glu-340. Zn(2+)-binding residues include His-343 and His-349. N-linked (GlcNAc...) asparagine glycosylation is present at Asn-377. Residues 407–493 form the Disintegrin domain; it reads PAVCGNYLVE…ECPTDQFQRN (87 aa). Residues Val-409, Asn-412, Glu-416, Glu-419, and Asp-422 each contribute to the Ca(2+) site. Intrachain disulfides connect Cys-410/Cys-439, Cys-421/Cys-434, Cys-423/Cys-429, Cys-433/Cys-456, Cys-447/Cys-453, Cys-452/Cys-478, Cys-465/Cys-485, Cys-472/Cys-504, Cys-497/Cys-509, Cys-516/Cys-566, Cys-531/Cys-577, Cys-544/Cys-554, Cys-561/Cys-603, and Cys-597/Cys-609. Positions 471 to 473 match the D/ECD-tripeptide motif; it reads ECD. Positions 473, 476, and 488 each coordinate Ca(2+). Asn-506 carries N-linked (GlcNAc...) asparagine glycosylation.

This sequence belongs to the venom metalloproteinase (M12B) family. P-III subfamily. P-IIIc sub-subfamily. Homodimer; disulfide-linked. Requires Zn(2+) as cofactor. Post-translationally, N-glycosylated. In terms of processing, the N-terminus is blocked. Expressed by the venom gland (at protein level). Expressed by the venom gland.

The protein resides in the secreted. The proteolytic activity requires Zn(2+) and Ca(2+) ions. The alpha-fibrinogenase activity is completely inhibited by EDTA, but not by PMSF. Functionally, zinc metalloprotease that has fibrinogenolytic and hemorrhagic activities. Cleaves insulin B chain readily at '38-Ala-|-Leu-39' bond, and at a significantly slower rate, at '40-Tyr-|-Leu-41' bond. Hydrolyzes isolated extracellular matrix (ECM) bovine fibronectin, and basal membrane (BM) proteins human collagen IV and, to a lesser extent, murine laminin, in vitro. Cleaves murine nidogen (at '350-Ser-|-Phe-351' and '380-Tyr-|-Asn-381' bonds), but not laminin, in a solubilized BM preparation. Hydrolyzes plasma proteins involved in blood coagulation in vitro. It significantly prolongs thrombin time. Has potent alpha-fibrinogenase activity cleaving human fibrinogen alpha chain at '432-Lys-|-Leu-433' bond, but does not cleave beta or gamma chains. Hydrolyzes bovine prothrombin, but does not cleave it at '366-Arg-|-Ile-367' bond, which is necessary for the formation of active alpha-thrombin, however, the cleavage of fragment 1 from it leads to reduced alpha-thrombin formation. Hydrolyzes bovine factor X heavy chain at '211-Ser-|-Leu-212', '213-Asp-|-Leu-214' and '216-Gly-|-Leu-217' bonds activating it only marginally as does not cleave at the physiological activation site. Does not cleave factor X light chain. No hydrolysis or activation of plasminogen. The alpha-fibrinogenase activity likely contributes to its hemorrhagic activity, which in rat can be completely neutralized in vivo by anti-ammodytagin antibodies, which strongly cross-react with this protein. Has very weak collagen-, ADP- and ristocetin-induced platelet aggregation inhibition activity in vitro. In Vipera ammodytes ammodytes (Western sand viper), this protein is Zinc metalloproteinase-disintegrin-like protein H3.